The following is a 158-amino-acid chain: Phosphopantetheine adenylyltransferase (158 aa).

Thr-9 is a substrate binding site. Residues 9-10 (TF) and His-17 each bind ATP. Residues Lys-41, Leu-73, and Arg-87 each contribute to the substrate site. ATP contacts are provided by residues 88-90 (GVR), Glu-98, and 123-129 (WSYVSST).

It belongs to the bacterial CoaD family. In terms of assembly, homohexamer. It depends on Mg(2+) as a cofactor.

It localises to the cytoplasm. It catalyses the reaction (R)-4'-phosphopantetheine + ATP + H(+) = 3'-dephospho-CoA + diphosphate. The protein operates within cofactor biosynthesis; coenzyme A biosynthesis; CoA from (R)-pantothenate: step 4/5. Reversibly transfers an adenylyl group from ATP to 4'-phosphopantetheine, yielding dephospho-CoA (dPCoA) and pyrophosphate. This chain is Phosphopantetheine adenylyltransferase, found in Histophilus somni (strain 129Pt) (Haemophilus somnus).